Consider the following 378-residue polypeptide: Dof zinc finger protein 1 (378 aa).

A compositionally biased stretch (low complexity) spans G28–P38. A disordered region spans residues G28 to N79. Residues A45–A63 are compositionally biased toward gly residues. A compositionally biased stretch (basic and acidic residues) spans T66 to A77. The segment at L78 to R132 adopts a Dof-type zinc-finger fold. Zn(2+)-binding residues include C80, C83, C105, and C108. 3 disordered regions span residues G116–A148, S203–G222, and L316–W378. Positions S133–A148 are enriched in low complexity. Composition is skewed to gly residues over residues G323–G338, A350–D361, and M369–W378.

The protein localises to the nucleus. In terms of biological role, transcription factor that may transactivate seed storage protein genes in developing seeds. This Oryza sativa subsp. japonica (Rice) protein is Dof zinc finger protein 1.